Reading from the N-terminus, the 179-residue chain is Natural killer cells antigen CD94 (179 aa).

Over 1–10 the chain is Cytoplasmic; sequence MAVSQTTLWN. A helical; Signal-anchor for type II membrane protein membrane pass occupies residues 11–31; that stretch reads LISGILGVICLLLMTTMGILL. Residues 32-179 lie on the Extracellular side of the membrane; the sequence is KNLLLTESIQ…SRFICKQELM (148 aa). Cystine bridges form between Cys-58–Cys-70, Cys-61–Cys-72, Cys-89–Cys-174, and Cys-152–Cys-166. The C-type lectin domain occupies 68–175; it reads HQCNCYLFFD…CEDKSRFICK (108 aa). 2 N-linked (GlcNAc...) asparagine glycosylation sites follow: Asn-93 and Asn-125.

Can form disulfide-bonded heterodimer with NKG2 family members KLRC1 and KLRC2. KLRD1-KLRC1 heterodimer interacts with peptide-bound MHC-E-B2M heterotrimeric complex. KLRD1 plays a prominent role in directly interacting with MHC-E. KLRD1-KLRC1 interacts with much higher affinity with peptide-bound MHC-E-B2M than KLRD1-KLRC2. Interacts with the adapter protein TYROBP/DAP12; this interaction is required for cell surface expression and cell activation.

The protein resides in the cell membrane. Functionally, immune receptor involved in self-nonself discrimination. In complex with KLRC1 or KLRC2 on cytotoxic and regulatory lymphocyte subsets, recognizes non-classical major histocompatibility (MHC) class Ib molecule MHC-E loaded with self-peptides derived from the signal sequence of classical MHC class Ia and non-classical MHC class Ib molecules. Enables cytotoxic cells to monitor the expression of MHC class I molecules in healthy cells and to tolerate self. Primarily functions as a ligand binding subunit as it lacks the capacity to signal. Its function is as follows. KLRD1-KLRC1 acts as an immune inhibitory receptor. Key inhibitory receptor on natural killer (NK) cells that regulates their activation and effector functions. Dominantly counteracts T cell receptor signaling on a subset of memory/effector CD8-positive T cells as part of an antigen-driven response to avoid autoimmunity. On intraepithelial CD8-positive gamma-delta regulatory T cells triggers TGFB1 secretion, which in turn limits the cytotoxic programming of intraepithelial CD8-positive alpha-beta T cells, distinguishing harmless from pathogenic antigens. In MHC-E-rich tumor microenvironment, acts as an immune inhibitory checkpoint and may contribute to progressive loss of effector functions of NK cells and tumor-specific T cells, a state known as cell exhaustion. Upon MHC-E-peptide binding, transmits intracellular signals through KLRC1 immunoreceptor tyrosine-based inhibition motifs (ITIMs) by recruiting INPP5D/SHIP-1 and INPPL1/SHIP-2 tyrosine phosphatases to ITIMs, and ultimately opposing signals transmitted by activating receptors through dephosphorylation of proximal signaling molecules. KLRD1-KLRC2 acts as an immune activating receptor. On cytotoxic lymphocyte subsets recognizes MHC-E loaded with signal sequence-derived peptides from non-classical MHC class Ib MHC-G molecules, likely playing a role in the generation and effector functions of adaptive NK cells and in maternal-fetal tolerance during pregnancy. Regulates the effector functions of terminally differentiated cytotoxic lymphocyte subsets, and in particular may play a role in adaptive NK cell response to viral infection. Upon MHC-E-peptide binding, transmits intracellular signals via the adapter protein TYROBP/DAP12, triggering the phosphorylation of proximal signaling molecules and cell activation. The sequence is that of Natural killer cells antigen CD94 (KLRD1) from Canis lupus familiaris (Dog).